We begin with the raw amino-acid sequence, 767 residues long: Two-component response regulator-like PRR73 (767 aa).

The disordered stretch occupies residues 1-64; it reads MGSACEAGTD…EPQQTDEQKE (64 aa). The region spanning 82 to 200 is the Response regulatory domain; that stretch reads RVLLVENDDS…ELKNLWQHVW (119 aa). Over residues 205 to 214 the composition is skewed to low complexity; that stretch reads SSSGSGSESG. Disordered regions lie at residues 205–272, 312–388, 476–546, 646–701, and 727–767; these read SSSG…QSSW, RWLP…NEPT, ASNQ…RGKV, ANYS…SGSG, and NFGK…DEDR. Over residues 238–252 the composition is skewed to acidic residues; the sequence is DNEDDDDNDEDDDDL. 3 stretches are compositionally biased toward polar residues: residues 263–272, 343–361, and 488–497; these read DNGSGTQSSW, RNSS…VNPT, and CSPQDNSSEA. Low complexity predominate over residues 518-531; sequence GSNGSSNNNDMGSS. The segment covering 532-543 has biased composition (polar residues); sequence TKNAITKPSSNR. Over residues 689-700 the composition is skewed to gly residues; it reads GAGGGNGSGSGS. A CCT domain is found at 712–754; the sequence is REAALNKFRQKRKVRNFGKKVRYQSRKRLAEQRPRIRGQFVRQ. A compositionally biased stretch (basic residues) spans 727 to 738; that stretch reads NFGKKVRYQSRK.

The protein belongs to the ARR-like family.

It localises to the nucleus. Controls photoperiodic flowering response. Seems to be one of the component of the circadian clock. Expression of several members of the ARR-like family is controlled by circadian rhythm. The particular coordinated sequential expression of PRR73, PRR37, PRR95, PRR59 and PPR1 result to circadian waves that may be at the basis of the endogenous circadian clock. This Oryza sativa subsp. japonica (Rice) protein is Two-component response regulator-like PRR73 (PRR73).